We begin with the raw amino-acid sequence, 605 residues long: Glucose oxidase (605 aa).

Residues 1–16 form the signal peptide; sequence MKTILSSSLVVSMAAA. 2 residues coordinate FAD: Leu51 and Thr52. Asn65 carries an N-linked (GlcNAc...) asparagine glycan. FAD is bound at residue Glu72. N-linked (GlcNAc...) asparagine glycosylation is present at Asn111. Positions 125, 129, 130, and 132 each coordinate FAD. An intrachain disulfide couples Cys186 to Cys228. An N-linked (GlcNAc...) asparagine glycan is attached at Asn190. Position 272 (Val272) interacts with FAD. Residues Asn280, Asn377, Asn410, and Asn495 are each glycosylated (N-linked (GlcNAc...) asparagine). His538 functions as the Proton acceptor in the catalytic mechanism. Arg559 and Val560 together coordinate O2. Gly571 and Met583 together coordinate FAD.

Belongs to the GMC oxidoreductase family. As to quaternary structure, homodimer. It depends on FAD as a cofactor.

Its subcellular location is the secreted. It localises to the cell wall. It is found in the cytoplasm. The protein resides in the extracellular space. The protein localises to the extracellular matrix. The enzyme catalyses beta-D-glucose + O2 = D-glucono-1,5-lactone + H2O2. Its function is as follows. Glucose oxidase catalyzes the oxidation of beta-D-glucose to D-glucono-delta-lactone and hydrogen peroxide in the presence of molecular oxygen. Acts as a critical factor modulating pathogenicity by controlling transcription of genes important for fungal secondary metabolism and infection such as those coding for enzymes involved in degradation of the host cell wall. The protein is Glucose oxidase of Aspergillus carbonarius (strain ITEM 5010).